Here is a 169-residue protein sequence, read N- to C-terminus: 6,7-dimethyl-8-ribityllumazine synthase (169 aa).

Residues Tyr-30, 61–63, and 90–92 contribute to the 5-amino-6-(D-ribitylamino)uracil site; these read ALE and CVI. 95-96 provides a ligand contact to (2S)-2-hydroxy-3-oxobutyl phosphate; it reads ET. The Proton donor role is filled by His-98. Residue Asn-123 coordinates 5-amino-6-(D-ribitylamino)uracil. Residue Arg-137 participates in (2S)-2-hydroxy-3-oxobutyl phosphate binding.

This sequence belongs to the DMRL synthase family.

It catalyses the reaction (2S)-2-hydroxy-3-oxobutyl phosphate + 5-amino-6-(D-ribitylamino)uracil = 6,7-dimethyl-8-(1-D-ribityl)lumazine + phosphate + 2 H2O + H(+). It functions in the pathway cofactor biosynthesis; riboflavin biosynthesis; riboflavin from 2-hydroxy-3-oxobutyl phosphate and 5-amino-6-(D-ribitylamino)uracil: step 1/2. Functionally, catalyzes the formation of 6,7-dimethyl-8-ribityllumazine by condensation of 5-amino-6-(D-ribitylamino)uracil with 3,4-dihydroxy-2-butanone 4-phosphate. This is the penultimate step in the biosynthesis of riboflavin. In Methylorubrum populi (strain ATCC BAA-705 / NCIMB 13946 / BJ001) (Methylobacterium populi), this protein is 6,7-dimethyl-8-ribityllumazine synthase.